The chain runs to 158 residues: UPF0225 protein Pput_1155 (158 aa).

Belongs to the UPF0225 family.

This chain is UPF0225 protein Pput_1155, found in Pseudomonas putida (strain ATCC 700007 / DSM 6899 / JCM 31910 / BCRC 17059 / LMG 24140 / F1).